The primary structure comprises 98 residues: RING finger protein Z (98 aa).

Over residues 1–10 the composition is skewed to basic and acidic residues; the sequence is MGNTKTKDRQ. The segment at 1–26 is disordered; sequence MGNTKTKDRQYQSNSSQPTNTSAPVL. A lipid anchor (N-myristoyl glycine; by host) is attached at glycine 2. Over residues 11–23 the composition is skewed to polar residues; sequence YQSNSSQPTNTSA. The RING-type; atypical zinc-finger motif lies at 41-77; sequence CRCCWFADTNLVNCSNHYLCLKCLNTMLRRSNLCDIC. Positions 91–94 match the PTAP/PSAP motif motif; it reads PSAP.

Belongs to the arenaviridae Z protein family. In terms of assembly, interacts with protein NP; this interaction probably directs the encapsidated genome to budding sites. Interacts (via RING domain) with polymerase L; this interaction inhibits viral transcription and replication, Z partially blocks the product exit tunnel for the releasing nascent RNA product. Interacts with the glycoprotein complex; this interaction plays a role in virion budding. Interacts with host eIF4E; this interaction results in eIF4E reduced affinity for its substrate, the 5'-m7 G cap structure. Interacts (via late-budding domain) with host TSG101; this interaction is essential for budding and release of viral particles. Interacts with host RPLP0; this interaction may serve to load ribosome-like particles inside the virion. Interacts with host PML; this interaction induces PML bodies redistribution in the cytoplasm upon viral infection. In terms of processing, myristoylation is required for the role of RING finger protein Z in assembly and budding.

The protein localises to the virion. The protein resides in the host cytoplasm. Its subcellular location is the host perinuclear region. It localises to the host cell membrane. In terms of biological role, plays a crucial role in virion assembly and budding. Expressed late in the virus life cycle, it acts as an inhibitor of viral transcription and RNA synthesis by interacting with the viral polymerase L. Presumably recruits the NP encapsidated genome to cellular membranes at budding sites via direct interaction with NP. Plays critical roles in the final steps of viral release by interacting with host TSG101, a member of the vacuolar protein-sorting pathway and using other cellular host proteins involved in vesicle formation pathway. The budding of the virus progeny occurs after association of protein Z with the viral glycoprotein complex SSP-GP1-GP2 at the cell periphery, step that requires myristoylation of protein Z. Also selectively represses protein production by associating with host eIF4E. In cell-based minigenome assay, has an inhibitory effect on the ribonucleoprotein machinery (vRNP), which is responsible for the replication and transcription of the viral genome. In Chapare mammarenavirus (isolate Human/Bolivia/810419/2003), this protein is RING finger protein Z.